A 304-amino-acid chain; its full sequence is Ribosomal protein L11 methyltransferase (304 aa).

Threonine 156, glycine 177, aspartate 199, and asparagine 240 together coordinate S-adenosyl-L-methionine.

Belongs to the methyltransferase superfamily. PrmA family.

The protein resides in the cytoplasm. It carries out the reaction L-lysyl-[protein] + 3 S-adenosyl-L-methionine = N(6),N(6),N(6)-trimethyl-L-lysyl-[protein] + 3 S-adenosyl-L-homocysteine + 3 H(+). Its function is as follows. Methylates ribosomal protein L11. This Symbiobacterium thermophilum (strain DSM 24528 / JCM 14929 / IAM 14863 / T) protein is Ribosomal protein L11 methyltransferase.